The sequence spans 484 residues: Cysteine--tRNA ligase (484 aa).

Position 29 (cysteine 29) interacts with Zn(2+). Positions 31–41 (PTVQSAPHIGH) match the 'HIGH' region motif. Cysteine 219, histidine 244, and glutamate 248 together coordinate Zn(2+). Residues 275-279 (KMSKS) carry the 'KMSKS' region motif. An ATP-binding site is contributed by lysine 278.

It belongs to the class-I aminoacyl-tRNA synthetase family. In terms of assembly, monomer. Requires Zn(2+) as cofactor.

It is found in the cytoplasm. It carries out the reaction tRNA(Cys) + L-cysteine + ATP = L-cysteinyl-tRNA(Cys) + AMP + diphosphate. In Clavibacter michiganensis subsp. michiganensis (strain NCPPB 382), this protein is Cysteine--tRNA ligase.